We begin with the raw amino-acid sequence, 522 residues long: Sensory neuron membrane protein 1 (522 aa).

Topologically, residues 1–11 (MKLPKHLKFAA) are cytoplasmic. The chain crosses the membrane as a helical span at residues 12–32 (GAGGAFLFGILFGWVMFPAIL). Over 33 to 455 (KGQLKKEMAL…KFQLFYPKKA (423 aa)) the chain is Extracellular. Residues N67 and N229 are each glycosylated (N-linked (GlcNAc...) asparagine). Disulfide bonds link C268–C333, C297–C350, and C335–C339. N438 is a glycosylation site (N-linked (GlcNAc...) asparagine). Residues 456–476 (VGVIKWLLVTFGGFGLIGCTI) traverse the membrane as a helical segment. The Cytoplasmic segment spans residues 477–522 (YHYKDRIMSFASSPGSAAVTKVKPEEVEQKDVSVIGQPQEPAKINM).

It belongs to the CD36 family.

It is found in the cell membrane. Its function is as follows. Plays an olfactory role that is not restricted to pheromone sensitivity. The chain is Sensory neuron membrane protein 1 from Plutella xylostella (Diamondback moth).